Reading from the N-terminus, the 563-residue chain is MTIVGLVIQQHDGTILFQNVREYLSLDKAHLAAKAFKNQISSYDENFITKGSISHLTGSVVVLNMYRVYYMILNELFILAISQANDNPFEGSIYLARAKRVLWSVSKDFTTTQINKKYTEVYFALERVLFGEDGVEVLSQKISEVSPHQPPHYNTHHHTSTPSVAPSFITGGSTTPPPITIFGRLIEPNQSNSLSNSISNSNSNNNNNNNNDSININSINSNIYQTTVPLTLSNVLNSSNFNNNNNNNNNNNNNNNNSNNSLNNSNSNSNIISPSSSSGNLSSFNNNNNNEEYNNYNNNYNSLDNSYSLQFESLMRLEQSNIPEKIFTQPNTLPKIDKHIYDPPQTIKWGNPSVSHIGSSASSTRVTNRIMFTLRHPNAGKEAKEKEKEKENEFKEQQEINNMNNNNNGANGNSGGSGNVIIGSAAAGSASSKSSPSTSPLSSSYNPSSPETSENSFSATPISDSNSLKNSIDNNNNNNNNNNNNNNSGDTPETPKRKFSLSMGTFNNSKSSLSTSNSNISTPDNGASSPLASSTSGSASSAAAPPPVPLTNSAKTKMNFLNF.

5 disordered regions span residues 146–170, 192–213, 235–298, 376–395, and 428–563; these read SPHQPPHYNTHHHTSTPSVAPSFIT, NSLSNSISNSNSNNNNNNNNDS, VLNS…NYNN, HPNAGKEAKEKEKEKENEFK, and GSAS…FLNF. Residues 379–395 are compositionally biased toward basic and acidic residues; the sequence is AGKEAKEKEKEKENEFK. Low complexity predominate over residues 428–459; the sequence is GSASSKSSPSTSPLSSSYNPSSPETSENSFSA. Residues 460–473 show a composition bias toward polar residues; the sequence is TPISDSNSLKNSID. Composition is skewed to low complexity over residues 474–487 and 507–543; these read NNNNNNNNNNNNNN and NNSKSSLSTSNSNISTPDNGASSPLASSTSGSASSAA. Residues 552-563 show a composition bias toward polar residues; it reads NSAKTKMNFLNF.

As to quaternary structure, component of the TSET complex, a heterohexamer composed of tstA, tstB, tstC, tstD, tstE and tstF, which may act in plasma membrane turnover. tstA, tstB, tstC and tstD are likely to be the core complex members with tstE and tstF acting as associated scaffold proteins.

This chain is TSET complex member tstC, found in Dictyostelium discoideum (Social amoeba).